A 338-amino-acid polypeptide reads, in one-letter code: GTPase Obg (338 aa).

The Obg domain maps to 1-159 (MSFIDEVKIH…RWLRLELKLM (159 aa)). The region spanning 160–331 (ADVGLLGMPS…LLDEIARNLW (172 aa)) is the OBG-type G domain. GTP is bound by residues 166–173 (GMPSVGKS), 191–195 (FTTLK), 213–216 (DIPG), 283–286 (NKID), and 312–314 (SAA). Mg(2+)-binding residues include serine 173 and threonine 193.

Belongs to the TRAFAC class OBG-HflX-like GTPase superfamily. OBG GTPase family. In terms of assembly, monomer. The cofactor is Mg(2+).

It is found in the cytoplasm. Its function is as follows. An essential GTPase which binds GTP, GDP and possibly (p)ppGpp with moderate affinity, with high nucleotide exchange rates and a fairly low GTP hydrolysis rate. Plays a role in control of the cell cycle, stress response, ribosome biogenesis and in those bacteria that undergo differentiation, in morphogenesis control. In Geotalea uraniireducens (strain Rf4) (Geobacter uraniireducens), this protein is GTPase Obg.